We begin with the raw amino-acid sequence, 113 residues long: Large ribosomal subunit protein bL19 (113 aa).

This sequence belongs to the bacterial ribosomal protein bL19 family.

Its function is as follows. This protein is located at the 30S-50S ribosomal subunit interface and may play a role in the structure and function of the aminoacyl-tRNA binding site. The chain is Large ribosomal subunit protein bL19 from Corynebacterium jeikeium (strain K411).